Consider the following 57-residue polypeptide: Large ribosomal subunit protein bL32 (57 aa).

Positions 1 to 20 (MAVPKRRMSRSNTRSRRAQW) are enriched in basic residues. A disordered region spans residues 1 to 22 (MAVPKRRMSRSNTRSRRAQWKA).

The protein belongs to the bacterial ribosomal protein bL32 family.

This chain is Large ribosomal subunit protein bL32, found in Mycobacterium sp. (strain JLS).